Consider the following 524-residue polypeptide: Peptide chain release factor 3 (524 aa).

Residues 10-278 (DSRRTFAIIS…TFLQFAPAPH (269 aa)) form the tr-type G domain. GTP-binding positions include 19–26 (SHPDAGKT), 87–91 (DTPGH), and 141–144 (NKLD).

This sequence belongs to the TRAFAC class translation factor GTPase superfamily. Classic translation factor GTPase family. PrfC subfamily.

The protein resides in the cytoplasm. Its function is as follows. Increases the formation of ribosomal termination complexes and stimulates activities of RF-1 and RF-2. It binds guanine nucleotides and has strong preference for UGA stop codons. It may interact directly with the ribosome. The stimulation of RF-1 and RF-2 is significantly reduced by GTP and GDP, but not by GMP. The protein is Peptide chain release factor 3 of Enterococcus faecalis (strain ATCC 700802 / V583).